The chain runs to 1072 residues: E3 ubiquitin-protein ligase RNF31 (1072 aa).

Residues 1–485 form a polyubiquitin-binding region; it reads MPGEEEERAF…PEKQRQDKMR (485 aa). The 72-residue stretch at 71–142 folds into the PUB domain; that stretch reads TLSTALNILE…SFPEGQEEPD (72 aa). The disordered stretch occupies residues 263 to 290; the sequence is QGTHLSPSLPASAQPRPQSTSLLALGDS. The span at 265 to 280 shows a compositional bias: polar residues; the sequence is THLSPSLPASAQPRPQ. A compositionally biased stretch (low complexity) spans 281-290; sequence STSLLALGDS. RanBP2-type zinc fingers lie at residues 299 to 329 and 350 to 379; these read SAHL…PRGC and ARGR…PRLA. Phosphoserine is present on serine 383. A RanBP2-type 3 zinc finger spans residues 409–438; it reads QSQVWYCIHCTFCNSSPGWVCVMCNRTSSP. Residues 443-484 form a disordered region; that stretch reads HAPRPYASSLEKGPPKPGPPRRLSAPLPSSCGDPEKQRQDKM. The segment covering 463–472 has biased composition (low complexity); that stretch reads RRLSAPLPSS. A Phosphoserine modification is found at serine 466. Over residues 475–484 the composition is skewed to basic and acidic residues; sequence DPEKQRQDKM. Residues 563 to 616 are interaction with RBCK1; that stretch reads GNLDEAVEECVRTRRRKVQELQSLGFGPEEGSLQALFQHGGDVSRALTELQRQR. Residues 564–615 form the UBA domain; it reads NLDEAVEECVRTRRRKVQELQSLGFGPEEGSLQALFQHGGDVSRALTELQRQ. The segment at 695–929 is TRIAD supradomain; that stretch reads LAQECAVCGW…KSLHGHHPRD (235 aa). Zn(2+) contacts are provided by cysteine 699, cysteine 702, cysteine 717, cysteine 719, cysteine 722, and cysteine 725. The RING-type 1 zinc finger occupies 699–749; the sequence is CAVCGWALPHNRMQALTSCECTICPDCFRQHFTIALKEKHITDMVCPACGR. A (Microbial infection) Glycyl lysine isopeptide (Lys-Gly) (interchain with G-Cter in ubiquitin) cross-link involves residue lysine 735. Zn(2+) is bound by residues cysteine 744 and cysteine 747. The IBR-type zinc finger occupies 779–841; that stretch reads ALFHKKLTEG…WEEQHRGRSC (63 aa). Lysine 783 participates in a covalent cross-link: (Microbial infection) Glycyl lysine isopeptide (Lys-Gly) (interchain with G-Cter in ubiquitin). Residues cysteine 799, cysteine 802, cysteine 817, cysteine 820, cysteine 825, cysteine 828, histidine 836, cysteine 841, cysteine 871, and cysteine 874 each contribute to the Zn(2+) site. The RING-type 2; atypical zinc-finger motif lies at 871-901; sequence CPKCKFSYALARGGCMHFHCTQCRHQFCSGC. Lysine 875 is covalently cross-linked ((Microbial infection) Glycyl lysine isopeptide (Lys-Gly) (interchain with G-Cter in ubiquitin)). Residue cysteine 885 is part of the active site. Positions 890, 893, 898, 901, 916, and 925 each coordinate Zn(2+). The interval 910 to 1072 is LDD domain; that stretch reads KCPEPNCRVK…LGQSIPRRRK (163 aa).

The protein belongs to the RBR family. As to quaternary structure, component of the LUBAC complex (linear ubiquitin chain assembly complex) which consists of SHARPIN, RBCK1 and RNF31. LUBAC has a MW of approximately 600 kDa suggesting a heteromultimeric assembly of its subunits. Associates with the TNF-R1 signaling complex (TNF-RSC) in a stimulation-dependent manner. Interacts (via the PUB domain) with OTULIN (via the PIM motif); the interaction is direct. Interacts (via the PUB domain) with VCP (via the PIM motif). Interacts (via the PUB domain) with SPATA2 (via the PIM motif); interaction is direct and bridges RNF31 and CYLD. Interacts with CYLD; the interaction is indirect and is mediated via SPATA2. Interacts with MUSK. Interacts with CARD11, promoting linear ubiquitination of BCL10. (Microbial infection) Interacts with S.flexneri E3 ubiquitin-protein ligases IpaH1.4 and IpaH2.5, leading to its ubiquitination. Post-translationally, autoubiquitinated. Interaction with OTULIN is required to suppress formation of 'Met-1'-linked polyubiquitin chains and prevent subsequent inactivation of the LUBAC complex. In terms of processing, cleaved by caspase during apoptosis. (Microbial infection) Ubiquitinated by S.flexneri E3 ubiquitin-protein ligases IpaH1.4 and IpaH2.5, leading to its degradation by the proteasome, thereby preventing formation of the bacterial ubiquitin coat and activation of innate immunity. As to expression, expressed in both normal and transformed breast epithelial cell lines.

The protein localises to the cytoplasm. It carries out the reaction [E2 ubiquitin-conjugating enzyme]-S-ubiquitinyl-L-cysteine + [acceptor protein]-L-lysine = [E2 ubiquitin-conjugating enzyme]-L-cysteine + [acceptor protein]-N(6)-ubiquitinyl-L-lysine.. It functions in the pathway protein modification; protein ubiquitination. E3 ubiquitin-protein ligase component of the LUBAC complex which conjugates linear ('Met-1'-linked) polyubiquitin chains to substrates and plays a key role in NF-kappa-B activation and regulation of inflammation. LUBAC conjugates linear polyubiquitin to IKBKG and RIPK1 and is involved in activation of the canonical NF-kappa-B and the JNK signaling pathways. Linear ubiquitination mediated by the LUBAC complex interferes with TNF-induced cell death and thereby prevents inflammation. LUBAC is recruited to the TNF-R1 signaling complex (TNF-RSC) following polyubiquitination of TNF-RSC components by BIRC2 and/or BIRC3 and to conjugate linear polyubiquitin to IKBKG and possibly other components contributing to the stability of the complex. The LUBAC complex is also involved in innate immunity by conjugating linear polyubiquitin chains at the surface of bacteria invading the cytosol to form the ubiquitin coat surrounding bacteria. LUBAC is not able to initiate formation of the bacterial ubiquitin coat, and can only promote formation of linear polyubiquitins on pre-existing ubiquitin. Recruited to the surface of bacteria by RNF213, which initiates the bacterial ubiquitin coat. The bacterial ubiquitin coat acts as an 'eat-me' signal for xenophagy and promotes NF-kappa-B activation. Together with OTULIN, the LUBAC complex regulates the canonical Wnt signaling during angiogenesis. RNF31 is required for linear ubiquitination of BCL10, thereby promoting TCR-induced NF-kappa-B activation. Binds polyubiquitin of different linkage types. This Homo sapiens (Human) protein is E3 ubiquitin-protein ligase RNF31.